We begin with the raw amino-acid sequence, 288 residues long: ATP synthase subunit a (288 aa).

6 consecutive transmembrane segments (helical) span residues 47-67 (LDSMLWSIGLGIVFCALFWLV), 104-124 (LIAPLALTIFVWIFLMNLMDL), 157-177 (DPNITLGMSFSVFALIIYYSI), 199-219 (PIAKIILIPINFILEFVTLIA), 237-257 (LIFVLIALMPFWIQWALSVPW), and 258-278 (AIFHILIITLQAFVFMMLTIV).

This sequence belongs to the ATPase A chain family. F-type ATPases have 2 components, CF(1) - the catalytic core - and CF(0) - the membrane proton channel. CF(1) has five subunits: alpha(3), beta(3), gamma(1), delta(1), epsilon(1). CF(0) has three main subunits: a(1), b(2) and c(9-12). The alpha and beta chains form an alternating ring which encloses part of the gamma chain. CF(1) is attached to CF(0) by a central stalk formed by the gamma and epsilon chains, while a peripheral stalk is formed by the delta and b chains.

The protein localises to the cell inner membrane. Key component of the proton channel; it plays a direct role in the translocation of protons across the membrane. This Psychrobacter sp. (strain PRwf-1) protein is ATP synthase subunit a.